Here is a 270-residue protein sequence, read N- to C-terminus: 4-hydroxy-tetrahydrodipicolinate reductase (270 aa).

NAD(+)-binding positions include 9 to 14 and Glu35; that span reads GAGGRM. Position 36 (Arg36) interacts with NADP(+). Residues 99 to 101 and 123 to 126 each bind NAD(+); these read GTT and ASNF. Catalysis depends on His156, which acts as the Proton donor/acceptor. His157 contacts (S)-2,3,4,5-tetrahydrodipicolinate. The Proton donor role is filled by Lys160. 166-167 lines the (S)-2,3,4,5-tetrahydrodipicolinate pocket; the sequence is GT.

It belongs to the DapB family.

The protein localises to the cytoplasm. The catalysed reaction is (S)-2,3,4,5-tetrahydrodipicolinate + NAD(+) + H2O = (2S,4S)-4-hydroxy-2,3,4,5-tetrahydrodipicolinate + NADH + H(+). It carries out the reaction (S)-2,3,4,5-tetrahydrodipicolinate + NADP(+) + H2O = (2S,4S)-4-hydroxy-2,3,4,5-tetrahydrodipicolinate + NADPH + H(+). The protein operates within amino-acid biosynthesis; L-lysine biosynthesis via DAP pathway; (S)-tetrahydrodipicolinate from L-aspartate: step 4/4. Catalyzes the conversion of 4-hydroxy-tetrahydrodipicolinate (HTPA) to tetrahydrodipicolinate. In Pasteurella multocida (strain Pm70), this protein is 4-hydroxy-tetrahydrodipicolinate reductase.